We begin with the raw amino-acid sequence, 581 residues long: Sulfate adenylyltransferase (581 aa).

Positions 1 to 176 are N-terminal; that stretch reads MANAPHGGVL…VQAIQAPTHF (176 aa). Residues 177–401 are catalytic; it reads DYVPLRFTPA…LRESYPPRPQ (225 aa). Position 204 (Gln204) interacts with sulfate. Residues 204–207 and 298–301 each bind ATP; these read QTRN and GRDH. Active-site residues include Thr205, Arg206, and Asn207. Position 206 (Arg206) interacts with sulfate. Residue Ala302 participates in sulfate binding. Met340 is an ATP binding site. The segment at 402-581 is allosteric regulation domain; adenylyl-sulfate kinase-like; the sequence is QGFTILLTGL…IMILESQNLV (180 aa). 3'-phosphoadenylyl sulfate-binding positions include 441–444, 486–487, and Arg526; these read EELR and TA.

The protein in the N-terminal section; belongs to the sulfate adenylyltransferase family. In the C-terminal section; belongs to the APS kinase family. In terms of assembly, homohexamer. Dimer of trimers.

It localises to the cytoplasm. The catalysed reaction is sulfate + ATP + H(+) = adenosine 5'-phosphosulfate + diphosphate. It participates in sulfur metabolism; hydrogen sulfide biosynthesis; sulfite from sulfate: step 1/3. With respect to regulation, allosterically inhibited by 3'-phosphoadenosine 5'-phosphosulfate (PAPS). In terms of biological role, catalyzes the first intracellular reaction of sulfate assimilation, forming adenosine-5'-phosphosulfate (APS) from inorganic sulfate and ATP. Plays an important role in sulfate activation as a component of the biosynthesis pathway of sulfur-containing amino acids. This is Sulfate adenylyltransferase from Cryptococcus neoformans var. neoformans serotype D (strain B-3501A) (Filobasidiella neoformans).